The primary structure comprises 379 residues: Homoserine O-succinyltransferase (379 aa).

The 310-residue stretch at 51 to 360 folds into the AB hydrolase-1 domain; sequence NAVLICHALS…DAPQGHDAFL (310 aa). Residue S157 is the Nucleophile of the active site. R227 contributes to the substrate binding site. Catalysis depends on residues D323 and H356. D357 contributes to the substrate binding site.

Belongs to the AB hydrolase superfamily. MetX family. Homodimer.

It is found in the cytoplasm. The enzyme catalyses L-homoserine + succinyl-CoA = O-succinyl-L-homoserine + CoA. It participates in amino-acid biosynthesis; L-methionine biosynthesis via de novo pathway; O-succinyl-L-homoserine from L-homoserine: step 1/1. In terms of biological role, transfers a succinyl group from succinyl-CoA to L-homoserine, forming succinyl-L-homoserine. The polypeptide is Homoserine O-succinyltransferase (Pseudomonas paraeruginosa (strain DSM 24068 / PA7) (Pseudomonas aeruginosa (strain PA7))).